Here is a 197-residue protein sequence, read N- to C-terminus: Phospholipid hydroperoxide glutathione peroxidase (197 aa).

The residue at position 40 (Ser-40) is a Phosphoserine. Residue Sec-73 is part of the active site. Residue Sec-73 is a non-standard amino acid, selenocysteine.

Belongs to the glutathione peroxidase family. As to quaternary structure, monomer. Has a tendency to form higher mass oligomers. Interacts with FUNDC1; this interaction promotes GPX4 recruitment into mitochondria through TOM/TIM complex where it is degraded by mitophagy.

The protein resides in the mitochondrion. It is found in the cytoplasm. The catalysed reaction is a hydroperoxy polyunsaturated fatty acid + 2 glutathione = a hydroxy polyunsaturated fatty acid + glutathione disulfide + H2O. The enzyme catalyses 2 glutathione + H2O2 = glutathione disulfide + 2 H2O. It carries out the reaction tert-butyl hydroperoxide + 2 glutathione = tert-butanol + glutathione disulfide + H2O. It catalyses the reaction cumene hydroperoxide + 2 glutathione = 2-phenylpropan-2-ol + glutathione disulfide + H2O. The catalysed reaction is (9S)-hydroperoxy-(10E,12Z)-octadecadienoate + 2 glutathione = (9S)-hydroxy-(10E,12Z)-octadecadienoate + glutathione disulfide + H2O. The enzyme catalyses (13S)-hydroperoxy-(9Z,11E)-octadecadienoate + 2 glutathione = (13S)-hydroxy-(9Z,11E)-octadecadienoate + glutathione disulfide + H2O. It carries out the reaction (5S)-hydroperoxy-(6E,8Z,11Z,14Z)-eicosatetraenoate + 2 glutathione = (5S)-hydroxy-(6E,8Z,11Z,14Z)-eicosatetraenoate + glutathione disulfide + H2O. It catalyses the reaction (12R)-hydroperoxy-(5Z,8Z,10E,14Z)-eicosatetraenoate + 2 glutathione = (12R)-hydroxy-(5Z,8Z,10E,14Z)-eicosatetraenoate + glutathione disulfide + H2O. The catalysed reaction is (12S)-hydroperoxy-(5Z,8Z,10E,14Z)-eicosatetraenoate + 2 glutathione = (12S)-hydroxy-(5Z,8Z,10E,14Z)-eicosatetraenoate + glutathione disulfide + H2O. The enzyme catalyses (15S)-hydroperoxy-(5Z,8Z,11Z,13E)-eicosatetraenoate + 2 glutathione = (15S)-hydroxy-(5Z,8Z,11Z,13E)-eicosatetraenoate + glutathione disulfide + H2O. It carries out the reaction (5S)-hydroperoxy-(6E,8Z,11Z,14Z,17Z)-eicosapentaenoate + 2 glutathione = (5S)-hydroxy-(6E,8Z,11Z,14Z,17Z)-eicosapentaenoate + glutathione disulfide + H2O. It catalyses the reaction (12S)-hydroperoxy-(5Z,8Z,10E,14Z,17Z)-eicosapentaenoate + 2 glutathione = (12S)-hydroxy-(5Z,8Z,10E,14Z,17Z)-eicosapentaenoate + glutathione disulfide + H2O. The catalysed reaction is (15S)-hydroperoxy-(5Z,8Z,11Z,13E,17Z)-eicosapentaenoate + 2 glutathione = (15S)-hydroxy-(5Z,8Z,11Z,13E,17Z)-eicosapentaenoate + glutathione disulfide + H2O. The enzyme catalyses (15S)-hydroperoxy-(11Z,13E)-eicosadienoate + 2 glutathione = (15S)-hydroxy-(11Z,13E)-eicosadienoate + glutathione disulfide + H2O. It carries out the reaction (17S)-hydroperoxy-(4Z,7Z,10Z,13Z,15E,19Z)-docosahexaenoate + 2 glutathione = (17S)-hydroxy-(4Z,7Z,10Z,13Z,15E,19Z)-docosahexaenoate + glutathione disulfide + H2O. It catalyses the reaction a hydroperoxy-1,2-diacyl-glycero-3-phosphocholine + 2 glutathione = a hydroxy-1,2-diacyl-glycero-3-phosphocholine + glutathione disulfide + H2O. Functionally, essential antioxidant peroxidase that directly reduces phospholipid hydroperoxide even if they are incorporated in membranes and lipoproteins. Can also reduce fatty acid hydroperoxide, cholesterol hydroperoxide and thymine hydroperoxide. Plays a key role in protecting cells from oxidative damage by preventing membrane lipid peroxidation. Required to prevent cells from ferroptosis, a non-apoptotic cell death resulting from an iron-dependent accumulation of lipid reactive oxygen species. The presence of selenocysteine (Sec) versus Cys at the active site is essential for life: it provides resistance to overoxidation and prevents cells against ferroptosis. The presence of Sec at the active site is also essential for the survival of a specific type of parvalbumin-positive interneurons, thereby preventing against fatal epileptic seizures. May be required to protect cells from the toxicity of ingested lipid hydroperoxides. Required for normal sperm development and male fertility. Essential for maturation and survival of photoreceptor cells. Plays a role in a primary T-cell response to viral and parasitic infection by protecting T-cells from ferroptosis and by supporting T-cell expansion. Plays a role of glutathione peroxidase in platelets in the arachidonic acid metabolism. Reduces hydroperoxy ester lipids formed by a 15-lipoxygenase that may play a role as down-regulator of the cellular 15-lipoxygenase pathway. Can also reduce small soluble hydroperoxides such as H2O2, cumene hydroperoxide and tert-butyl hydroperoxide. The polypeptide is Phospholipid hydroperoxide glutathione peroxidase (Pongo pygmaeus (Bornean orangutan)).